The following is a 307-amino-acid chain: 1D-myo-inositol 2-acetamido-2-deoxy-alpha-D-glucopyranoside deacetylase 1 (307 aa).

Positions 21, 24, and 157 each coordinate Zn(2+).

Belongs to the MshB deacetylase family. Requires Zn(2+) as cofactor.

The catalysed reaction is 1D-myo-inositol 2-acetamido-2-deoxy-alpha-D-glucopyranoside + H2O = 1D-myo-inositol 2-amino-2-deoxy-alpha-D-glucopyranoside + acetate. In terms of biological role, catalyzes the deacetylation of 1D-myo-inositol 2-acetamido-2-deoxy-alpha-D-glucopyranoside (GlcNAc-Ins) in the mycothiol biosynthesis pathway. This chain is 1D-myo-inositol 2-acetamido-2-deoxy-alpha-D-glucopyranoside deacetylase 1, found in Frankia casuarinae (strain DSM 45818 / CECT 9043 / HFP020203 / CcI3).